A 148-amino-acid chain; its full sequence is Small ribosomal subunit protein uS9 (148 aa).

It belongs to the universal ribosomal protein uS9 family.

The sequence is that of Small ribosomal subunit protein uS9 (RpS16) from Drosophila melanogaster (Fruit fly).